Here is a 131-residue protein sequence, read N- to C-terminus: Large ribosomal subunit protein uL22 (131 aa).

Positions 1–11 (MAKGHRSKIKR) are enriched in basic residues. Residues 1-20 (MAKGHRSKIKRERNEVRDTR) form a disordered region.

This sequence belongs to the universal ribosomal protein uL22 family. In terms of assembly, part of the 50S ribosomal subunit.

This protein binds specifically to 23S rRNA; its binding is stimulated by other ribosomal proteins, e.g. L4, L17, and L20. It is important during the early stages of 50S assembly. It makes multiple contacts with different domains of the 23S rRNA in the assembled 50S subunit and ribosome. In terms of biological role, the globular domain of the protein is located near the polypeptide exit tunnel on the outside of the subunit, while an extended beta-hairpin is found that lines the wall of the exit tunnel in the center of the 70S ribosome. The polypeptide is Large ribosomal subunit protein uL22 (Agathobacter rectalis (strain ATCC 33656 / DSM 3377 / JCM 17463 / KCTC 5835 / VPI 0990) (Eubacterium rectale)).